The chain runs to 634 residues: Chaperone protein DnaK (634 aa).

Threonine 193 is modified (phosphothreonine; by autocatalysis). The segment at 597 to 634 (GNANNTSSTESTTTNNNNEEDSKVVDSDYQEIDKKDGK) is disordered. Residues 600-613 (NNTSSTESTTTNNN) show a composition bias toward low complexity. Basic and acidic residues predominate over residues 616 to 634 (EDSKVVDSDYQEIDKKDGK).

This sequence belongs to the heat shock protein 70 family.

Functionally, acts as a chaperone. In Ehrlichia canis (strain Jake), this protein is Chaperone protein DnaK.